Consider the following 443-residue polypeptide: Enolase (443 aa).

Glutamine 167 lines the (2R)-2-phosphoglycerate pocket. Glutamate 209 functions as the Proton donor in the catalytic mechanism. Mg(2+) is bound by residues aspartate 246, glutamate 291, and aspartate 318. Residues lysine 343, arginine 372, serine 373, and lysine 394 each contribute to the (2R)-2-phosphoglycerate site. The active-site Proton acceptor is the lysine 343.

It belongs to the enolase family. In terms of assembly, component of the RNA degradosome, a multiprotein complex involved in RNA processing and mRNA degradation. It depends on Mg(2+) as a cofactor.

It localises to the cytoplasm. The protein localises to the secreted. The protein resides in the cell surface. The enzyme catalyses (2R)-2-phosphoglycerate = phosphoenolpyruvate + H2O. Its pathway is carbohydrate degradation; glycolysis; pyruvate from D-glyceraldehyde 3-phosphate: step 4/5. Catalyzes the reversible conversion of 2-phosphoglycerate (2-PG) into phosphoenolpyruvate (PEP). It is essential for the degradation of carbohydrates via glycolysis. The polypeptide is Enolase (Wigglesworthia glossinidia brevipalpis).